A 215-amino-acid chain; its full sequence is Proteasome subunit beta type-1 (215 aa).

Met1 carries the N-acetylmethionine modification. Positions 1-19 (MNGIQVDINRLKKGEVSLG) are cleaved as a propeptide — removed in mature form. Thr20 (nucleophile) is an active-site residue.

This sequence belongs to the peptidase T1B family. In terms of assembly, the 26S proteasome consists of a 20S proteasome core and two 19S regulatory subunits. The 20S proteasome core is composed of 28 subunits that are arranged in four stacked rings, resulting in a barrel-shaped structure. The two end rings are each formed by seven alpha subunits, and the two central rings are each formed by seven beta subunits. The catalytic chamber with the active sites is on the inside of the barrel.

The protein resides in the cytoplasm. The protein localises to the nucleus. The enzyme catalyses Cleavage of peptide bonds with very broad specificity.. The proteasome degrades poly-ubiquitinated proteins in the cytoplasm and in the nucleus. It is essential for the regulated turnover of proteins and for the removal of misfolded proteins. The proteasome is a multicatalytic proteinase complex that is characterized by its ability to cleave peptides with Arg, Phe, Tyr, Leu, and Glu adjacent to the leaving group at neutral or slightly basic pH. It has an ATP-dependent proteolytic activity. PRE3 and PRE4 are necessary for the peptidyl-glutamyl-peptide-hydrolyzing activity. Functionally, this subunit is necessary for the peptidylglutamyl-peptide hydrolyzing activity. In Saccharomyces cerevisiae (strain ATCC 204508 / S288c) (Baker's yeast), this protein is Proteasome subunit beta type-1 (PRE3).